Consider the following 208-residue polypeptide: Probable nicotinate-nucleotide adenylyltransferase (208 aa).

It belongs to the NadD family.

The catalysed reaction is nicotinate beta-D-ribonucleotide + ATP + H(+) = deamido-NAD(+) + diphosphate. It participates in cofactor biosynthesis; NAD(+) biosynthesis; deamido-NAD(+) from nicotinate D-ribonucleotide: step 1/1. Its function is as follows. Catalyzes the reversible adenylation of nicotinate mononucleotide (NaMN) to nicotinic acid adenine dinucleotide (NaAD). The chain is Probable nicotinate-nucleotide adenylyltransferase from Symbiobacterium thermophilum (strain DSM 24528 / JCM 14929 / IAM 14863 / T).